The sequence spans 167 residues: MEPLVETVIEDGRWEELDLPALATRAAEATLAALDMPAEGFTLVVMGCDDARIAELNGAFRQKGKPTNVLSWPSEERASEEPGMAPEPPEPGDPEDPEPLGDVAIAFETCQREAAEQGKPVTDHVTHLLVHGVLHLLGYDHVEEADGDLMEATETRILAGLGVPDPY.

Residues 64 to 101 (GKPTNVLSWPSEERASEEPGMAPEPPEPGDPEDPEPLG) are disordered. Over residues 90-99 (EPGDPEDPEP) the composition is skewed to acidic residues. Positions 131, 135, and 141 each coordinate Zn(2+).

It belongs to the endoribonuclease YbeY family. Requires Zn(2+) as cofactor.

The protein localises to the cytoplasm. In terms of biological role, single strand-specific metallo-endoribonuclease involved in late-stage 70S ribosome quality control and in maturation of the 3' terminus of the 16S rRNA. This is Endoribonuclease YbeY from Cereibacter sphaeroides (strain ATCC 17023 / DSM 158 / JCM 6121 / CCUG 31486 / LMG 2827 / NBRC 12203 / NCIMB 8253 / ATH 2.4.1.) (Rhodobacter sphaeroides).